The chain runs to 444 residues: Ribosomal protein uS12 methylthiotransferase RimO (444 aa).

Residues 1-117 (MKVGIISLGC…ITEVISSALK (117 aa)) form the MTTase N-terminal domain. [4Fe-4S] cluster contacts are provided by cysteine 10, cysteine 46, cysteine 80, cysteine 154, cysteine 158, and cysteine 161. A Radical SAM core domain is found at 140–370 (YQPGPSAYIK…WEVQKEITRK (231 aa)). The region spanning 373 to 441 (EGLVGTEMRV…DYDLIGEMTN (69 aa)) is the TRAM domain.

This sequence belongs to the methylthiotransferase family. RimO subfamily. It depends on [4Fe-4S] cluster as a cofactor.

It is found in the cytoplasm. It catalyses the reaction L-aspartate(89)-[ribosomal protein uS12]-hydrogen + (sulfur carrier)-SH + AH2 + 2 S-adenosyl-L-methionine = 3-methylsulfanyl-L-aspartate(89)-[ribosomal protein uS12]-hydrogen + (sulfur carrier)-H + 5'-deoxyadenosine + L-methionine + A + S-adenosyl-L-homocysteine + 2 H(+). Catalyzes the methylthiolation of an aspartic acid residue of ribosomal protein uS12. The chain is Ribosomal protein uS12 methylthiotransferase RimO from Natranaerobius thermophilus (strain ATCC BAA-1301 / DSM 18059 / JW/NM-WN-LF).